A 104-amino-acid polypeptide reads, in one-letter code: NADH-quinone oxidoreductase subunit K (104 aa).

3 consecutive transmembrane segments (helical) span residues 4–24 (VPAS…LFGA), 31–51 (VIVL…FVAF), and 67–87 (LFTM…LIAL).

Belongs to the complex I subunit 4L family. As to quaternary structure, NDH-1 is composed of 14 different subunits. Subunits NuoA, H, J, K, L, M, N constitute the membrane sector of the complex.

It localises to the cell membrane. It carries out the reaction a quinone + NADH + 5 H(+)(in) = a quinol + NAD(+) + 4 H(+)(out). In terms of biological role, NDH-1 shuttles electrons from NADH, via FMN and iron-sulfur (Fe-S) centers, to quinones in the respiratory chain. The immediate electron acceptor for the enzyme in this species is believed to be a menaquinone. Couples the redox reaction to proton translocation (for every two electrons transferred, four hydrogen ions are translocated across the cytoplasmic membrane), and thus conserves the redox energy in a proton gradient. The sequence is that of NADH-quinone oxidoreductase subunit K from Bacillus anthracis (strain A0248).